Consider the following 305-residue polypeptide: Probable lipid kinase YegS-like (305 aa).

The 129-residue stretch at 1 to 129 (MTQRRAMLIL…VDLGEVGGKL (129 aa)) folds into the DAGKc domain. Residues T39, 65 to 71 (GDGTLRD), and T92 each bind ATP. Residues L210, D213, and L215 each coordinate Mg(2+). E268 functions as the Proton acceptor in the catalytic mechanism.

Belongs to the diacylglycerol/lipid kinase family. YegS lipid kinase subfamily. Mg(2+) is required as a cofactor. The cofactor is Ca(2+).

It localises to the cytoplasm. In terms of biological role, probably phosphorylates lipids; the in vivo substrate is unknown. This is Probable lipid kinase YegS-like from Pseudomonas syringae pv. tomato (strain ATCC BAA-871 / DC3000).